Here is a 1002-residue protein sequence, read N- to C-terminus: Lon protease homolog, mitochondrial (1002 aa).

The 212-residue stretch at 102–313 (VIALPLPHRP…LTLELVKKEM (212 aa)) folds into the Lon N-terminal domain. 468 to 475 (GPPGVGKT) provides a ligand contact to ATP. The 185-residue stretch at 811 to 995 (QTPVGVVMGL…NEIFDIAFQS (185 aa)) folds into the Lon proteolytic domain. Residues serine 901 and lysine 944 contribute to the active site.

Belongs to the peptidase S16 family. Homohexamer or homoheptamer. Organized in a ring with a central cavity.

The protein localises to the mitochondrion matrix. It catalyses the reaction Hydrolysis of proteins in presence of ATP.. In terms of biological role, ATP-dependent serine protease that mediates the selective degradation of misfolded, unassembled or oxidatively damaged polypeptides as well as certain short-lived regulatory proteins in the mitochondrial matrix. May also have a chaperone function in the assembly of inner membrane protein complexes. Participates in the regulation of mitochondrial gene expression and in the maintenance of the integrity of the mitochondrial genome. Binds to mitochondrial DNA in a site-specific manner. The chain is Lon protease homolog, mitochondrial from Oryza sativa subsp. japonica (Rice).